A 650-amino-acid polypeptide reads, in one-letter code: Probable ATP-dependent RNA helicase DDX17 (650 aa).

The disordered stretch occupies residues 1–38; it reads MRGGGFGDRDRDRDRGGFGARGGSGLPPKKFGNPGERL. The segment covering 7-16 has biased composition (basic and acidic residues); sequence GDRDRDRDRG. Residues K29, K30, and K42 each carry the N6-acetyllysine modification. K50 participates in a covalent cross-link: Glycyl lysine isopeptide (Lys-Gly) (interchain with G-Cter in SUMO); alternate. A Glycyl lysine isopeptide (Lys-Gly) (interchain with G-Cter in SUMO1); alternate cross-link involves residue K50. Residue K50 forms a Glycyl lysine isopeptide (Lys-Gly) (interchain with G-Cter in SUMO2); alternate linkage. The Q motif motif lies at 92–120; that stretch reads FAFHHANFPQYVMDVLMDQHFTEPTPIQC. A Helicase ATP-binding domain is found at 123-298; that stretch reads FPLALSGRDM…EDFLRDYTQI (176 aa). 136-143 provides a ligand contact to ATP; sequence AQTGSGKT. Residues 246–249 carry the DEAD box motif; sequence DEAD. In terms of domain architecture, Helicase C-terminal spans 326 to 473; the sequence is KLIQLMEEIM…AINPKLMQLV (148 aa). T444 carries the post-translational modification Phosphothreonine. K449 participates in a covalent cross-link: Glycyl lysine isopeptide (Lys-Gly) (interchain with G-Cter in SUMO2). Positions 468-650 are transactivation domain; sequence KLMQLVDHRG…PPPPPPPSRK (183 aa). 2 disordered regions span residues 472–543 and 583–650; these read LVDH…YGSP and ASST…PSRK. Residues 489 to 499 show a composition bias toward polar residues; sequence RTTSSANNPNL. A compositionally biased stretch (basic and acidic residues) spans 504-531; the sequence is ECDRRLRGVKDGGRRDSTSYRDRSETDR. Residues 583 to 609 show a composition bias toward low complexity; the sequence is ASSTASAGRSSQSSSQQFSGIGRSGQQ. Residue R605 is modified to Omega-N-methylarginine. The span at 610-619 shows a compositional bias: polar residues; it reads PQPLMSQQFA. Over residues 638–650 the composition is skewed to pro residues; the sequence is YPPPPPPPPPSRK. The segment at 639-647 is interaction with YAP1; that stretch reads PPPPPPPPP.

The protein belongs to the DEAD box helicase family. DDX5/DBP2 subfamily. In terms of assembly, interacts with DDX5 in an RNA-independent manner. Interacts with CDK9 transcription elongation complex under basal conditions. Following cell stimulation with poly(I:C), a synthetic double-stranded RNA mimicking viral infection, the interaction with CDK9 is decreased. Interacts with ESR1 in an estrogen-independent manner. Interacts with HNRNPH1; this interaction is important for the regulation of alternative splicing on G-quadruplex structures. At high, but not low, cell density, interacts with DROSHA and DGCR8, the core components of the microprocessor complex involved in the maturation of primary microRNAs (pri-miRNAs) into pre-miRNAs. The interaction with DGCR8 is reduced during mitosis. At low, but not high, cell density, interacts with YAP1 and with its paralog, WWTR1/TAZ. Interactions with DROSHA and YAP1 are mutually exclusive. In vitro, the pre-miRNA processing activity of the DDX17-containing microprocessor complex is weaker than that of the DROSHA/DGCR8 microprocessor complex. Interacts with UPF3B. Interacts with NFAT5; this interaction leads to DDX17 recruitment to LNC2 and S100A4 promoters and NFAT5-mediated DDX17-enhanced transactivation. Interacts with HDAC1, HDAC2 and HDAC3; this interaction with HDAC1 and HDAC3, but not HDAC2, depends upon DDX17 acetylation. Interacts with ZC3HAV1 (via N-terminal domain) in an RNA-independent manner. Interacts with EXOSC3/RRP40 and EXOSC5/RRP46; this interaction may be indirect and mediated by ZC3HAV1-binding. Interacts with EP300; this interaction leads to acetylation at lysine residues. Interacts with CREBBP/CBP and KAT2B/P/CAF. Directly interacts with CTNNB1. Interacts with MYOD1. Interacts with TP53. Interacts with DCP1A in an RNA-independent manner. Interacts with DCP2 in an RNA-dependent manner. Interacts with DHX36; this interaction occurs in a RNA-dependent manner. Interacts with ERCC6. Sumoylation significantly increases stability. It also promotes interaction specifically with HDAC1 (but not HDAC2, nor HDAC3) and strongly stimulates ESR1 and TP53 coactivation. In terms of processing, acetylation at lysine residues stabilizes the protein, stimulates interaction with HDAC1 and HDAC3, but not HDAC2, and represses ESR1 and TP53 coactivation activity.

It is found in the nucleus. It localises to the nucleolus. The protein localises to the cytoplasm. The protein resides in the cytosol. It catalyses the reaction ATP + H2O = ADP + phosphate + H(+). Functionally, as an RNA helicase, unwinds RNA and alters RNA structures through ATP binding and hydrolysis. Involved in multiple cellular processes, including pre-mRNA splicing, alternative splicing, ribosomal RNA processing and miRNA processing, as well as transcription regulation. Regulates the alternative splicing of exons exhibiting specific features. This function requires the RNA helicase activity. Affects NFAT5 and histone macro-H2A.1/MACROH2A1 alternative splicing in a CDK9-dependent manner. Affects splicing of mediators of steroid hormone signaling pathway, including kinases that phosphorylates ESR1 and transcriptional regulators. By acting splicing of regulatory factors, participates in ESR1 and AR stabilization. Promotes the inclusion of specific AC-rich alternative exons in CD44 transcripts. In myoblasts and epithelial cells, cooperates with HNRNPH1 to control the splicing of specific subsets of exons. In addition to binding mature mRNAs, also interacts with certain pri-microRNAs, including MIR132/miR-132, and stabilizes the primary transcript. Also participates in the MIR132 processing, resulting in significantly higher levels of mature MIR132 than MIR212 despite the fact that both are cotranscribed and co-regulated. Binding of pri-microRNAs may occur on the 3' segment flanking the stem loop via the 5'-[ACG]CAUC[ACU]-3' consensus sequence. Participates in MYC down-regulation at high cell density through the production of MYC-targeting microRNAs. Along with DDX5, may be involved in the processing of the 32S intermediate into the mature 28S rRNA. Promoter-specific transcription regulator, functioning as a coactivator or corepressor depending on the context of the promoter and the transcriptional complex in which it exists. Enhances NFAT5 transcriptional activity. Synergizes with TP53 in the activation of the MDM2 promoter; this activity requires acetylation on lysine residues. May also coactivate MDM2 transcription through a TP53-independent pathway. Coactivates MMP7 transcription. Along with CTNNB1, coactivates MYC, JUN, FOSL1 and cyclin D1/CCND1 transcription. Alone or in combination with DDX5 and/or SRA1 non-coding RNA, plays a critical role in promoting the assembly of proteins required for the formation of the transcription initiation complex and chromatin remodeling leading to coactivation of MYOD1-dependent transcription. This helicase-independent activity is required for skeletal muscle cells to properly differentiate into myotubes. During epithelial-to-mesenchymal transition, coregulates SMAD-dependent transcriptional activity, directly controlling key effectors of differentiation, including miRNAs which in turn directly repress its expression. Plays a role in estrogen and testosterone signaling pathway at several levels. Mediates the use of alternative promoters in estrogen-responsive genes and regulates transcription and splicing of a large number of steroid hormone target genes. Contrary to the splicing regulation activity, transcriptional coregulation of the estrogen receptor ESR1 is helicase activity-independent. Plays a role in innate immunity. Specifically restricts bunyavirus infection, including Rift Valley fever virus (RVFV) or La Crosse virus (LACV), but not vesicular stomatitis virus (VSV), in an interferon- and DROSHA-independent manner. Binds to RVFV RNA, likely via structured viral RNA elements. Promotes mRNA degradation mediated by the antiviral zinc-finger protein ZC3HAV1, in an ATPase-dependent manner. This is Probable ATP-dependent RNA helicase DDX17 (Ddx17) from Mus musculus (Mouse).